Here is a 653-residue protein sequence, read N- to C-terminus: Protease 1 (653 aa).

Residues 1–20 (MKRICGSLLLLGLSISAALA) constitute a signal peptide (or 27). A propeptide spanning residues 21–205 (APASRPAAFD…RRLAAASGEK (185 aa)) is cleaved from the precursor. Disulfide bonds link cysteine 211–cysteine 421, cysteine 217–cysteine 285, and cysteine 241–cysteine 263. Catalysis depends on charge relay system residues histidine 262, aspartate 318, and serine 399. The PKD domain occupies 474-553 (NTPPVANFTS…TNTKTGSVTV (80 aa)). A propeptide spans 474 to 653 (NTPPVANFTS…AAQRAPGSCG (180 aa)) (thr/Ser-rich). Residues 555–653 (GGPGAQTYTN…AAQRAPGSCG (99 aa)) enclose the P/Homo B domain.

It belongs to the peptidase S1 family. Three disulfide bonds are present.

It is found in the secreted. The enzyme catalyses Preferential cleavage: Lys-|-Xaa, including Lys-|-Pro.. The protein is Protease 1 of Achromobacter lyticus.